Reading from the N-terminus, the 923-residue chain is Alanine--tRNA ligase (923 aa).

His-611, His-615, Cys-714, and His-718 together coordinate Zn(2+).

Belongs to the class-II aminoacyl-tRNA synthetase family. The cofactor is Zn(2+).

The protein localises to the cytoplasm. It catalyses the reaction tRNA(Ala) + L-alanine + ATP = L-alanyl-tRNA(Ala) + AMP + diphosphate. In terms of biological role, catalyzes the attachment of alanine to tRNA(Ala) in a two-step reaction: alanine is first activated by ATP to form Ala-AMP and then transferred to the acceptor end of tRNA(Ala). Also edits incorrectly charged Ser-tRNA(Ala) and Gly-tRNA(Ala) via its editing domain. The polypeptide is Alanine--tRNA ligase (Methanosarcina barkeri (strain Fusaro / DSM 804)).